The following is a 197-amino-acid chain: NADH-quinone oxidoreductase subunit I 2 (197 aa).

4Fe-4S ferredoxin-type domains are found at residues 42 to 71 and 91 to 120; these read GVIG…IDSH and DRFA…WSPE. Residues Cys51, Cys54, Cys57, Cys61, Cys100, Cys103, Cys106, and Cys110 each coordinate [4Fe-4S] cluster. The segment at 147–197 is disordered; the sequence is APPALDPGAEEPKELAAARKAADKLAAQQQPDQPGPDHPGQPDESGQEGRT. Over residues 156–169 the composition is skewed to basic and acidic residues; the sequence is EEPKELAAARKAAD.

It belongs to the complex I 23 kDa subunit family. In terms of assembly, NDH-1 is composed of 14 different subunits. Subunits NuoA, H, J, K, L, M, N constitute the membrane sector of the complex. Requires [4Fe-4S] cluster as cofactor.

It localises to the cell membrane. The catalysed reaction is a quinone + NADH + 5 H(+)(in) = a quinol + NAD(+) + 4 H(+)(out). Its function is as follows. NDH-1 shuttles electrons from NADH, via FMN and iron-sulfur (Fe-S) centers, to quinones in the respiratory chain. The immediate electron acceptor for the enzyme in this species is believed to be ubiquinone. Couples the redox reaction to proton translocation (for every two electrons transferred, four hydrogen ions are translocated across the cytoplasmic membrane), and thus conserves the redox energy in a proton gradient. This is NADH-quinone oxidoreductase subunit I 2 from Streptomyces coelicolor (strain ATCC BAA-471 / A3(2) / M145).